A 274-amino-acid chain; its full sequence is Mitochondrial S-adenosylmethionine carrier protein (274 aa).

Solcar repeat units follow at residues 4–77 (PGFV…VKWF), 86–168 (LTPM…LKAL), and 177–265 (VDSW…THSL). 6 helical membrane-spanning segments follow: residues 5–25 (GFVA…LILF), 49–69 (IYAG…AFFI), 85–105 (YLTP…ACLI), 142–162 (RGYK…FPLW), 182–202 (SAVC…PLDV), and 238–258 (FAGV…FLGA).

The protein belongs to the mitochondrial carrier (TC 2.A.29) family. As to expression, widely expressed. Highly expressed in testis, with moderate expression in brain, heart, kidney, lung, skeletal muscle, pancreas, small intestine and liver, and low expression in spleen.

The protein resides in the mitochondrion inner membrane. The catalysed reaction is S-adenosyl-L-homocysteine(out) + S-adenosyl-L-methionine(in) = S-adenosyl-L-homocysteine(in) + S-adenosyl-L-methionine(out). Its activity is regulated as follows. Strongly inhibited by tannic acid and Bromocresol Purple. Functionally, mitochondrial S-adenosyl-L-methionine/S-adenosyl-L-homocysteine antiporter. Mediates the exchange of cytosolic S-adenosyl-L-methionine, the predominant methyl-group donor for macromolecule methylation processes, for mitochondrial S-adenosylhomocysteine(SAH), a by-product of methylation reactions. In Homo sapiens (Human), this protein is Mitochondrial S-adenosylmethionine carrier protein.